We begin with the raw amino-acid sequence, 621 residues long: SH2B adapter protein 2 (621 aa).

Y47 carries the post-translational modification Phosphotyrosine. S130 bears the Phosphoserine mark. Positions 143–166 (RRSSPEPDGGATPKAAEPASEPRD) are disordered. The PH domain occupies 186–299 (DIQREGALRF…WVADIQGCVD (114 aa)). S303 is modified (phosphoserine). Residues 409-507 (WFHGTLSRVK…SADITLRSYV (99 aa)) form the SH2 domain. 2 disordered regions span residues 507–528 (VRAQ…PVPA) and 549–611 (PASP…LGRA). The span at 552-571 (PSNGAGASSSSGSSSSATSL) shows a compositional bias: low complexity. Position 597 is a phosphoserine (S597). Y618 carries the phosphotyrosine modification.

It belongs to the SH2B adapter family. Homodimer. Interacts with KIT/c-KIT, SHC1, EPOR, PDGFR, VAV1 and VAV3. Interacts (via N-terminal region) with SHC1. Interacts (via the phosphorylated C-terminus) with GRB2. Interacts (via its SH2 domain) with EPOR, INSR and KIT. Interacts with GRB2 after B-cell antigen receptor stimulation. Interacts (via PH domain) with VAV3. Interacts with NTRK1, NTRK2 and NTRK3 (phosphorylated); after stimulation of the receptor by its extracellular ligand and subsequent autophosphorylation of the receptor. Binds INSR, GRB2, ASB6 and CAP. Insulin stimulation leads to dissociation of CAP. Binds CBS only when SH2B2/APS has become phosphorylated. INSR binding does not depend on the phosphorylation of SH2B2/APS. Tyrosine phosphorylated by JAK2, KIT and other kinases activated by B-cell receptor in response to stimulation with cytokines, IL3, IL5, PDGF, IGF1, IGF2, CSF2/GM-CSF and cross-linking of the B-cell receptor complex. As to expression, strongly expressed in brain; also expressed in spleen, kidney and skeletal muscle, and at low levels in small intestine and bone marrow. Strongly expressed in B-cell lines, but not T-cell lines. Also expressed in myeloid and fibroblast cell lines.

It is found in the cytoplasm. The protein localises to the cell membrane. Its function is as follows. Adapter protein for several members of the tyrosine kinase receptor family. Involved in multiple signaling pathways. May be involved in coupling from immunoreceptor to Ras signaling. Acts as a negative regulator of cytokine signaling in collaboration with CBL. Binds to EPOR and suppresses EPO-induced STAT5 activation, possibly through a masking effect on STAT5 docking sites in EPOR. Suppresses PDGF-induced mitogenesis. May induce cytoskeletal reorganization via interaction with VAV3. The protein is SH2B adapter protein 2 (Sh2b2) of Mus musculus (Mouse).